Here is a 618-residue protein sequence, read N- to C-terminus: Beta-xylosidase (618 aa).

Disordered stretches follow at residues 76–100 and 463–509; these read ERDR…QEES and LEPQ…PPIQ.

Belongs to the glycosyl hydrolase 52 family.

The protein resides in the secreted. It catalyses the reaction Hydrolysis of (1-&gt;4)-beta-D-xylans, to remove successive D-xylose residues from the non-reducing termini.. It functions in the pathway glycan degradation; xylan degradation. The polypeptide is Beta-xylosidase (xylA) (Geobacillus stearothermophilus (Bacillus stearothermophilus)).